The primary structure comprises 409 residues: Protein a6 (409 aa).

S86 carries the post-translational modification Phosphoserine. Residues 106-120 (RAHRTGRRQAPRRAA) are compositionally biased toward basic residues. The interval 106–165 (RAHRTGRRQAPRRAATHSYPVTDSILITSDDEHNEQEPSSTARVRSQLSMRSPPPLAPLT) is disordered. T133 carries the phosphothreonine modification. Phosphoserine is present on S134. The segment covering 142-155 (EPSSTARVRSQLSM) has biased composition (polar residues).

This is Protein a6 (a6) from Drosophila melanogaster (Fruit fly).